A 113-amino-acid polypeptide reads, in one-letter code: Hydrogenase maturation factor HypA (113 aa).

His2 contacts Ni(2+). Zn(2+) is bound by residues Cys73, Cys76, Cys89, and Cys92.

This sequence belongs to the HypA/HybF family.

Its function is as follows. Involved in the maturation of [NiFe] hydrogenases. Required for nickel insertion into the metal center of the hydrogenase. In Aeromonas hydrophila subsp. hydrophila (strain ATCC 7966 / DSM 30187 / BCRC 13018 / CCUG 14551 / JCM 1027 / KCTC 2358 / NCIMB 9240 / NCTC 8049), this protein is Hydrogenase maturation factor HypA.